The chain runs to 100 residues: Sec-independent protein translocase protein TatA (100 aa).

The helical transmembrane segment at 1–21 threads the bilayer; it reads MGALRPWHIAVLVVVLILLFG. Basic and acidic residues predominate over residues 46 to 58; the sequence is LHDDDRDLAEKAD. A disordered region spans residues 46 to 100; it reads LHDDDRDLAEKADAQAGYQPMPPQVQQGQHPQQSPYPAPPQQQPVVDPVQRTRDS. A compositionally biased stretch (low complexity) spans 69–78; sequence QVQQGQHPQQ.

Belongs to the TatA/E family. In terms of assembly, the Tat system comprises two distinct complexes: a TatABC complex, containing multiple copies of TatA, TatB and TatC subunits, and a separate TatA complex, containing only TatA subunits. Substrates initially bind to the TatABC complex, which probably triggers association of the separate TatA complex to form the active translocon.

The protein localises to the cell membrane. Part of the twin-arginine translocation (Tat) system that transports large folded proteins containing a characteristic twin-arginine motif in their signal peptide across membranes. TatA could form the protein-conducting channel of the Tat system. The sequence is that of Sec-independent protein translocase protein TatA from Salinispora tropica (strain ATCC BAA-916 / DSM 44818 / JCM 13857 / NBRC 105044 / CNB-440).